A 282-amino-acid chain; its full sequence is Nucleotide-binding protein XCC2806 (282 aa).

5-12 (GLSGSGKS) serves as a coordination point for ATP. 57 to 60 (DVRS) provides a ligand contact to GTP.

This sequence belongs to the RapZ-like family.

Its function is as follows. Displays ATPase and GTPase activities. This is Nucleotide-binding protein XCC2806 from Xanthomonas campestris pv. campestris (strain ATCC 33913 / DSM 3586 / NCPPB 528 / LMG 568 / P 25).